Reading from the N-terminus, the 86-residue chain is Large ribosomal subunit protein bL31B (86 aa).

The protein belongs to the bacterial ribosomal protein bL31 family. Type B subfamily. In terms of assembly, part of the 50S ribosomal subunit.

In Chloroherpeton thalassium (strain ATCC 35110 / GB-78), this protein is Large ribosomal subunit protein bL31B.